An 81-amino-acid chain; its full sequence is MASLKKSLFLVLFLGLVSLSICEEEKRENEDEEEQEDDEQSEMKRGLWSNIKTAGKEAAKAALKAAGKAALGAVTDAVGEQ.

The N-terminal stretch at 1 to 22 (MASLKKSLFLVLFLGLVSLSIC) is a signal peptide. Positions 23 to 44 (EEEKRENEDEEEQEDDEQSEMK) are excised as a propeptide. A disordered region spans residues 24 to 48 (EEKRENEDEEEQEDDEQSEMKRGLW). Acidic residues predominate over residues 30-40 (EDEEEQEDDEQ). The residue at position 78 (Val78) is a Valine amide. The propeptide occupies 80-81 (EQ).

It belongs to the frog skin active peptide (FSAP) family. Dermaseptin subfamily. Expressed by the skin glands.

It localises to the secreted. Has antimicrobial activity. The chain is Dermaseptin-B7 (DRG1) from Phyllomedusa bicolor (Two-colored leaf frog).